A 567-amino-acid chain; its full sequence is Proline--tRNA ligase (567 aa).

The protein belongs to the class-II aminoacyl-tRNA synthetase family. ProS type 1 subfamily. As to quaternary structure, homodimer.

The protein resides in the cytoplasm. It catalyses the reaction tRNA(Pro) + L-proline + ATP = L-prolyl-tRNA(Pro) + AMP + diphosphate. Catalyzes the attachment of proline to tRNA(Pro) in a two-step reaction: proline is first activated by ATP to form Pro-AMP and then transferred to the acceptor end of tRNA(Pro). As ProRS can inadvertently accommodate and process non-cognate amino acids such as alanine and cysteine, to avoid such errors it has two additional distinct editing activities against alanine. One activity is designated as 'pretransfer' editing and involves the tRNA(Pro)-independent hydrolysis of activated Ala-AMP. The other activity is designated 'posttransfer' editing and involves deacylation of mischarged Ala-tRNA(Pro). The misacylated Cys-tRNA(Pro) is not edited by ProRS. The polypeptide is Proline--tRNA ligase (Staphylococcus aureus (strain Mu3 / ATCC 700698)).